Reading from the N-terminus, the 236-residue chain is Ribosomal RNA large subunit methyltransferase E (236 aa).

Gly-76, Trp-78, Asp-99, Asp-115, and Asp-140 together coordinate S-adenosyl-L-methionine. Lys-180 acts as the Proton acceptor in catalysis.

It belongs to the class I-like SAM-binding methyltransferase superfamily. RNA methyltransferase RlmE family.

Its subcellular location is the cytoplasm. The enzyme catalyses uridine(2552) in 23S rRNA + S-adenosyl-L-methionine = 2'-O-methyluridine(2552) in 23S rRNA + S-adenosyl-L-homocysteine + H(+). Specifically methylates the uridine in position 2552 of 23S rRNA at the 2'-O position of the ribose in the fully assembled 50S ribosomal subunit. This chain is Ribosomal RNA large subunit methyltransferase E, found in Rhodopseudomonas palustris (strain HaA2).